Here is a 56-residue protein sequence, read N- to C-terminus: Protein translocase subunit SecE (56 aa).

The helical transmembrane segment at 30–50 (VFWLVLFVSIFLGIVDYLMFL) threads the bilayer.

This sequence belongs to the SecE/SEC61-gamma family. As to quaternary structure, component of the Sec protein translocase complex. Heterotrimer consisting of SecY, SecE and SecG subunits. The heterotrimers can form oligomers, although 1 heterotrimer is thought to be able to translocate proteins. Interacts with the ribosome. Interacts with SecDF, and other proteins may be involved. Interacts with SecA.

The protein localises to the cell inner membrane. Its function is as follows. Essential subunit of the Sec protein translocation channel SecYEG. Clamps together the 2 halves of SecY. May contact the channel plug during translocation. The polypeptide is Protein translocase subunit SecE (Borreliella burgdorferi (strain ATCC 35210 / DSM 4680 / CIP 102532 / B31) (Borrelia burgdorferi)).